A 680-amino-acid chain; its full sequence is DNA ligase (680 aa).

NAD(+) contacts are provided by residues 35–39 (DAQYD), 84–85 (SL), and Glu115. Residue Lys117 is the N6-AMP-lysine intermediate of the active site. Residues Arg138, Glu174, Lys291, and Lys315 each contribute to the NAD(+) site. The Zn(2+) site is built by Cys419, Cys422, Cys437, and Cys442. Positions 601-680 (NKNMPFSGME…REFINMLEQS (80 aa)) constitute a BRCT domain.

Belongs to the NAD-dependent DNA ligase family. LigA subfamily. Mg(2+) is required as a cofactor. Requires Mn(2+) as cofactor.

The enzyme catalyses NAD(+) + (deoxyribonucleotide)n-3'-hydroxyl + 5'-phospho-(deoxyribonucleotide)m = (deoxyribonucleotide)n+m + AMP + beta-nicotinamide D-nucleotide.. In terms of biological role, DNA ligase that catalyzes the formation of phosphodiester linkages between 5'-phosphoryl and 3'-hydroxyl groups in double-stranded DNA using NAD as a coenzyme and as the energy source for the reaction. It is essential for DNA replication and repair of damaged DNA. The polypeptide is DNA ligase (Dehalococcoides mccartyi (strain ATCC BAA-2100 / JCM 16839 / KCTC 5957 / BAV1)).